Here is a 141-residue protein sequence, read N- to C-terminus: Anthrone oxygenase ptaC (141 aa).

An N-terminal signal peptide occupies residues 1 to 19 (MMGLPLMAVPMLLDTGADP). Transmembrane regions (helical) follow at residues 33–53 (GVRTMPPLAITTFILYVWTII) and 64–84 (ILAVAAVVTMGMIPFTWYVLA).

This sequence belongs to the anthrone oxygenase family.

The protein resides in the membrane. Its pathway is secondary metabolite biosynthesis. In terms of biological role, anthrone oxygenase; part of the gene cluster that mediates the biosynthesis of pestheic acid, a diphenyl ether which is a biosynthetic precursor of the unique chloropupukeananes. The biosynthesis initiates from condensation of acetate and malonate units catalyzed by the non-reducing PKS ptaA. As the ptaA protein is TE/CLC domain-deficient, hydrolysis and Claisen cyclization of the polyketide could be catalyzed by ptaB containing a beta-lactamase domain. The ptaB protein might hydrolyze the thioester bond between the ACP of ptaA and the intermediate to release atrochrysone carboxylic acid, which is spontaneously dehydrated to form endocrocin anthrone. Endocrocin anthrone is then converted to endocrocin, catalyzed by the anthrone oxygenase ptaC. Spontaneous decarboxylation of endocrocin occurs to generate emodin. An O-methyltransferase (ptaH or ptaI) could methylate emodin to form physcion. PtaJ could then catalyze the oxidative cleavage of physcion, and rotation of the intermediate could then afford desmethylisosulochrin. PtaF, a putative NADH-dependent oxidoreductase, might also participate in the oxidative cleavage step. Desmethylisosulochrin is then transformed by another O-methyltransferase (ptaH or ptaI) to form isosulochrin. Chlorination of isosulochrin by ptaM in the cyclohexadienone B ring then produces chloroisosulochrin. PtaE is responsible for the oxidative coupling reactions of both benzophenones isosulochrin and chloroisosulochrin to RES-1214-1 and pestheic acid respectively, regardless of chlorination. In Pestalotiopsis fici (strain W106-1 / CGMCC3.15140), this protein is Anthrone oxygenase ptaC.